We begin with the raw amino-acid sequence, 218 residues long: Large ribosomal subunit protein uL3 (218 aa).

It belongs to the universal ribosomal protein uL3 family. In terms of assembly, part of the 50S ribosomal subunit. Forms a cluster with proteins L14 and L19.

Its function is as follows. One of the primary rRNA binding proteins, it binds directly near the 3'-end of the 23S rRNA, where it nucleates assembly of the 50S subunit. This chain is Large ribosomal subunit protein uL3, found in Syntrophus aciditrophicus (strain SB).